We begin with the raw amino-acid sequence, 109 residues long: Phosphoribosyl-ATP pyrophosphatase (109 aa).

The protein belongs to the PRA-PH family.

It is found in the cytoplasm. It carries out the reaction 1-(5-phospho-beta-D-ribosyl)-ATP + H2O = 1-(5-phospho-beta-D-ribosyl)-5'-AMP + diphosphate + H(+). It functions in the pathway amino-acid biosynthesis; L-histidine biosynthesis; L-histidine from 5-phospho-alpha-D-ribose 1-diphosphate: step 2/9. In Parvibaculum lavamentivorans (strain DS-1 / DSM 13023 / NCIMB 13966), this protein is Phosphoribosyl-ATP pyrophosphatase.